Consider the following 369-residue polypeptide: Quinolinate synthase (369 aa).

Residues histidine 47 and serine 64 each contribute to the iminosuccinate site. Cysteine 111 serves as a coordination point for [4Fe-4S] cluster. Residues tyrosine 142–asparagine 144 and serine 163 contribute to the iminosuccinate site. Cysteine 231 is a [4Fe-4S] cluster binding site. Iminosuccinate-binding positions include histidine 257 to glutamate 259 and threonine 274. Cysteine 321 lines the [4Fe-4S] cluster pocket.

It belongs to the quinolinate synthase family. Type 3 subfamily. The cofactor is [4Fe-4S] cluster.

The protein localises to the cytoplasm. It carries out the reaction iminosuccinate + dihydroxyacetone phosphate = quinolinate + phosphate + 2 H2O + H(+). Its pathway is cofactor biosynthesis; NAD(+) biosynthesis; quinolinate from iminoaspartate: step 1/1. Catalyzes the condensation of iminoaspartate with dihydroxyacetone phosphate to form quinolinate. The protein is Quinolinate synthase of Bacillus licheniformis (strain ATCC 14580 / DSM 13 / JCM 2505 / CCUG 7422 / NBRC 12200 / NCIMB 9375 / NCTC 10341 / NRRL NRS-1264 / Gibson 46).